Reading from the N-terminus, the 754-residue chain is 5-methyltetrahydropteroyltriglutamate--homocysteine methyltransferase (754 aa).

5-methyltetrahydropteroyltri-L-glutamate is bound by residues 17-20 (RELK) and Lys117. L-homocysteine contacts are provided by residues 431–433 (IGS) and Glu484. Residues 431–433 (IGS) and Glu484 each bind L-methionine. Residues 515-516 (RC) and Trp561 contribute to the 5-methyltetrahydropteroyltri-L-glutamate site. Asp599 contributes to the L-homocysteine binding site. An L-methionine-binding site is contributed by Asp599. 5-methyltetrahydropteroyltri-L-glutamate is bound at residue Glu605. Zn(2+)-binding residues include His641, Cys643, and Glu665. Catalysis depends on His694, which acts as the Proton donor. Zn(2+) is bound at residue Cys726.

It belongs to the vitamin-B12 independent methionine synthase family. Zn(2+) is required as a cofactor.

It catalyses the reaction 5-methyltetrahydropteroyltri-L-glutamate + L-homocysteine = tetrahydropteroyltri-L-glutamate + L-methionine. It participates in amino-acid biosynthesis; L-methionine biosynthesis via de novo pathway; L-methionine from L-homocysteine (MetE route): step 1/1. In terms of biological role, catalyzes the transfer of a methyl group from 5-methyltetrahydrofolate to homocysteine resulting in methionine formation. This chain is 5-methyltetrahydropteroyltriglutamate--homocysteine methyltransferase, found in Salmonella paratyphi B (strain ATCC BAA-1250 / SPB7).